Here is a 152-residue protein sequence, read N- to C-terminus: uncharacterized protein (152 aa).

The N-terminal stretch at 1–24 is a signal peptide; the sequence is MRKMLAYTLYIVTYLTYIMNEVEC.

This is an uncharacterized protein from Acheta domesticus (House cricket).